We begin with the raw amino-acid sequence, 197 residues long: MRRLKNLPGLTGTGKSNTSNLGEFRLAVDQSTSRKISQFCVRLEAKQRLRLNYGLTERQLLRYVRIARRTRGSTGQVLLQLLEMRLDNIIFQLGMASTIPAARQLVCHRHILVNHRVVDIPSYRCKPRDIISIRNRPTSANALKSESLSGNEVPDHLTLSISKTGEPTGLVNHLVNRESVNLDINELLVVEYYSRKA.

An S4 RNA-binding domain is found at 84 to 143 (MRLDNIIFQLGMASTIPAARQLVCHRHILVNHRVVDIPSYRCKPRDIISIRNRPTSANAL).

This sequence belongs to the universal ribosomal protein uS4 family. In terms of assembly, part of the 30S ribosomal subunit. Contacts protein S5. The interaction surface between S4 and S5 is involved in control of translational fidelity.

The protein resides in the plastid. It is found in the chloroplast. One of the primary rRNA binding proteins, it binds directly to 16S rRNA where it nucleates assembly of the body of the 30S subunit. Functionally, with S5 and S12 plays an important role in translational accuracy. The polypeptide is Small ribosomal subunit protein uS4c (rps4) (Adiantum capillus-veneris (Maidenhair fern)).